A 327-amino-acid chain; its full sequence is Malate dehydrogenase (327 aa).

12 to 18 (GAAGQIG) is an NAD(+) binding site. 2 residues coordinate substrate: Arg-93 and Arg-99. Residues Asn-106, Gln-113, and 130 to 132 (VGN) contribute to the NAD(+) site. 2 residues coordinate substrate: Asn-132 and Arg-163. Residue His-188 is the Proton acceptor of the active site.

The protein belongs to the LDH/MDH superfamily. MDH type 2 family.

The enzyme catalyses (S)-malate + NAD(+) = oxaloacetate + NADH + H(+). In terms of biological role, catalyzes the reversible oxidation of malate to oxaloacetate. The sequence is that of Malate dehydrogenase from Cupriavidus pinatubonensis (strain JMP 134 / LMG 1197) (Cupriavidus necator (strain JMP 134)).